The primary structure comprises 253 residues: Ribonuclease HII (253 aa).

The RNase H type-2 domain occupies 70–253 (PLVAGIDEVG…RSFSPVQNAL (184 aa)). A divalent metal cation-binding residues include Asp76, Glu77, and Asp168.

It belongs to the RNase HII family. Requires Mn(2+) as cofactor. Mg(2+) serves as cofactor.

Its subcellular location is the cytoplasm. It carries out the reaction Endonucleolytic cleavage to 5'-phosphomonoester.. In terms of biological role, endonuclease that specifically degrades the RNA of RNA-DNA hybrids. This is Ribonuclease HII from Latilactobacillus sakei subsp. sakei (strain 23K) (Lactobacillus sakei subsp. sakei).